We begin with the raw amino-acid sequence, 31 residues long: L-amino-acid oxidase (31 aa).

This sequence belongs to the flavin monoamine oxidase family. FIG1 subfamily. In terms of assembly, homodimer; non-covalently linked. Requires FAD as cofactor. In terms of processing, N-glycosylated. Expressed by the venom gland.

The protein localises to the secreted. The enzyme catalyses an L-alpha-amino acid + O2 + H2O = a 2-oxocarboxylate + H2O2 + NH4(+). The catalysed reaction is L-leucine + O2 + H2O = 4-methyl-2-oxopentanoate + H2O2 + NH4(+). It carries out the reaction L-phenylalanine + O2 + H2O = 3-phenylpyruvate + H2O2 + NH4(+). It catalyses the reaction L-histidine + O2 + H2O = 3-(imidazol-5-yl)pyruvate + H2O2 + NH4(+). In terms of biological role, catalyzes an oxidative deamination of predominantly hydrophobic and aromatic L-amino acids, thus producing hydrogen peroxide that may contribute to the diverse toxic effects of this enzyme. Is moderately active on L-Leu, L-His, and L-Phe, and very weakly active on L-Thr, and L-Cys. Exhibits diverse biological activities, such as hemorrhage, hemolysis, edema, antibacterial and antiparasitic activities, as well as regulation of platelet aggregation. Its effect on platelets is controversial, since it either induces aggregation or inhibits agonist-induced aggregation. These different effects are probably due to different experimental conditions. Inhibits growth of B.subtilis strain ATCC 6633 (MIC=32 uM), E.faecalis strain ATCC 12953 (MIC=32 uM), S.aureus strain ATCC 29213 (MIC=32 uM), S.pyogenes strain ATCC 19615 (MIC=8 uM), E.coli strain ATCC 8739 (MIC=4 uM), K.pneumoniae strain ATCC 13885 (MIC=2 uM), P.mirabilis strain ATCC 25933 (MIC=2 uM), P.aeruginosa strain ATCC 15442 (MIC=8 uM) and S.typhimurium strain ATCC 14028 (MIC=8 uM). The sequence is that of L-amino-acid oxidase from Bothrops mattogrossensis (Pitviper).